We begin with the raw amino-acid sequence, 2752 residues long: Serine/arginine repetitive matrix protein 2 (2752 aa).

Methionine 1 bears the N-acetylmethionine mark. Residues 60–92 are a coiled coil; sequence HERKRRVELRCLELEEMMEEQGYEEQQIQEKVA. Lysine 101 carries the N6-acetyllysine modification. Residues lysine 108 and lysine 130 each participate in a glycyl lysine isopeptide (Lys-Gly) (interchain with G-Cter in SUMO2) cross-link. The interval 141-2131 is disordered; sequence ISDSYVDGSS…MSPTPLDRCR (1991 aa). Tyrosine 145 carries the post-translational modification Phosphotyrosine. N6-acetyllysine is present on lysine 169. Low complexity predominate over residues 175–185; it reads RESSSSRSPTP. Composition is skewed to basic residues over residues 186-197 and 207-249; these read KQKKKKKKKDRG and RERK…KRSR. Residues 197-259 form a sufficient for RNA-binding region; the sequence is GRRSESSSPR…STTPAPKSRR (63 aa). Phosphoserine occurs at positions 220 and 222. Low complexity predominate over residues 263-290; it reads STSADSASSSDTSRSRSRSAAAKTHTTA. Position 286 is a phosphothreonine (threonine 286). A phosphoserine mark is found at serine 295, serine 297, serine 300, serine 322, and serine 323. Residues 313 to 333 show a composition bias toward polar residues; the sequence is PGTTSTQRPSSPETATKQPSS. The span at 335–347 shows a compositional bias: basic and acidic residues; the sequence is YEDKDKDKKEKSA. The segment covering 348-360 has biased composition (low complexity); the sequence is TRPSPSPERSSTG. Phosphoserine is present on residues serine 351, serine 353, serine 357, and serine 358. Phosphothreonine is present on residues threonine 359 and threonine 367. A Phosphoserine modification is found at serine 377. Positions 380-398 are enriched in polar residues; that stretch reads PLATTPLSQEPVNPPSEAS. 2 positions are modified to phosphothreonine: threonine 383 and threonine 384. Phosphoserine is present on residues serine 387, serine 395, serine 398, serine 404, and serine 408. Over residues 399 to 410 the composition is skewed to basic and acidic residues; that stretch reads PTRDRSPPKSPE. Over residues 411-421 the composition is skewed to low complexity; sequence KLPQSSSSESS. 6 positions are modified to phosphoserine: serine 424, serine 435, serine 436, serine 437, serine 440, and serine 454. The span at 461-483 shows a compositional bias: basic residues; sequence NRSHGRAKRDKSHSHTPSRRMGR. Residues serine 484, serine 486, serine 506, serine 508, serine 510, serine 534, serine 536, and serine 543 each carry the phosphoserine modification. The segment covering 491–536 has biased composition (basic residues); sequence KRGRSRSRTPTKRGHSRSRSPQWRRSRSAQRWGRSRSPQRRGRSRS. Over residues 537–546 the composition is skewed to low complexity; it reads PQRPGWSRSR. Composition is skewed to basic residues over residues 547–564, 571–723, and 732–742; these read NTQR…RSHS, GRSR…RRGR, and NKSRTSQRRSR. Serine 702, serine 704, and serine 706 each carry phosphoserine. Phosphoserine is present on residues serine 778, serine 780, and serine 783. Positions 790-805 are enriched in low complexity; sequence SQTPPRRSRSGSSQPK. Residues 806–816 are compositionally biased toward basic residues; it reads AKSRTPPRRSR. A compositionally biased stretch (low complexity) spans 828–841; the sequence is KTPSRQSHSSSSPH. A phosphoserine mark is found at serine 846 and serine 854. The span at 849–869 shows a compositional bias: polar residues; sequence PPRQGSITSPQANEQSVTPQR. Threonine 856 is modified (phosphothreonine). A phosphoserine mark is found at serine 857 and serine 864. Threonine 866 is subject to Phosphothreonine. A phosphoserine mark is found at serine 871, serine 875, serine 876, serine 908, serine 935, serine 950, serine 952, serine 954, serine 957, serine 968, serine 970, serine 972, serine 973, and serine 974. Composition is skewed to low complexity over residues 901-917 and 924-945; these read SSTP…SPQP and SPRQ…TSRT. 2 positions are modified to phosphothreonine: threonine 977 and threonine 983. Residues serine 992 and serine 994 each carry the phosphoserine modification. Phosphotyrosine is present on tyrosine 996. Phosphothreonine is present on threonine 1003. Positions 1008–1017 are enriched in low complexity; that stretch reads SLSGSKSPCP. A phosphoserine mark is found at serine 1010, serine 1014, serine 1024, serine 1028, serine 1032, and serine 1042. Positions 1040–1064 are enriched in polar residues; sequence KSSTPPGESYFGVSSLQLKGQSQTS. Residue threonine 1043 is modified to Phosphothreonine. Residue tyrosine 1049 is modified to Phosphotyrosine. Phosphoserine occurs at positions 1064, 1069, 1072, 1073, 1083, 1099, 1101, 1102, and 1103. Positions 1071–1092 are enriched in polar residues; sequence TSSPEVRQSHSESPSLQSKSQT. Positions 1093 to 1104 are enriched in low complexity; it reads SPKGGRSRSSSP. Threonine 1106 bears the Phosphothreonine mark. Serine 1112, serine 1122, serine 1124, serine 1129, serine 1132, serine 1152, serine 1179, serine 1188, and serine 1198 each carry phosphoserine. Polar residues predominate over residues 1132–1159; the sequence is SPEQSRFQSDSSSYPTVDSNSLLGQSRL. The span at 1204-1214 shows a compositional bias: basic and acidic residues; it reads DTLRTPPRERS. Threonine 1208 is subject to Phosphothreonine. Residues serine 1214, serine 1219, serine 1227, serine 1254, serine 1257, serine 1258, serine 1266, serine 1270, and serine 1271 each carry the phosphoserine modification. The segment covering 1216 to 1233 has biased composition (polar residues); that stretch reads AGSSPETKEQNSALPTSS. A compositionally biased stretch (polar residues) spans 1283–1292; it reads TLDQSQSQAS. A phosphoserine mark is found at serine 1311, serine 1318, serine 1320, serine 1326, serine 1329, serine 1336, serine 1348, serine 1368, serine 1382, serine 1383, serine 1384, serine 1387, serine 1401, serine 1403, and serine 1404. Residues 1318–1328 are compositionally biased toward polar residues; the sequence is SNSPLRENSFG. Polar residues predominate over residues 1376 to 1386; it reads TRSSGHSSSEL. Threonine 1413 carries the post-translational modification Phosphothreonine. Phosphoserine is present on residues serine 1415, serine 1421, serine 1423, and serine 1424. Threonine 1434 carries the phosphothreonine modification. Positions 1441–1452 are enriched in low complexity; sequence SGSSPGLRDGSG. A phosphoserine mark is found at serine 1444 and serine 1451. Threonine 1453 bears the Phosphothreonine mark. A compositionally biased stretch (polar residues) spans 1453–1463; sequence TPSRHSLSGSS. Serine 1458, serine 1460, serine 1462, and serine 1463 each carry phosphoserine. The residue at position 1472 (threonine 1472) is a Phosphothreonine. A phosphoserine mark is found at serine 1482 and serine 1483. Position 1492 is a phosphothreonine (threonine 1492). Phosphoserine is present on residues serine 1497, serine 1499, serine 1501, and serine 1502. Threonine 1511 carries the phosphothreonine modification. 4 positions are modified to phosphoserine: serine 1517, serine 1519, serine 1521, and serine 1522. Residue threonine 1531 is modified to Phosphothreonine. Residues 1534 to 1544 show a composition bias toward polar residues; sequence GQRSRSGSSQE. Phosphoserine is present on residues serine 1537, serine 1539, serine 1541, serine 1542, and serine 1552. The span at 1555–1567 shows a compositional bias: basic and acidic residues; the sequence is ERSESDSSPDSKA. Basic residues predominate over residues 1568 to 1577; that stretch reads KTRTPLRQRS. Residues serine 1577, serine 1579, serine 1581, serine 1582, serine 1598, serine 1600, serine 1601, serine 1616, serine 1620, serine 1621, serine 1648, serine 1658, serine 1691, serine 1693, and serine 1694 each carry the phosphoserine modification. Residues 1638–1657 show a composition bias toward low complexity; sequence SGSSSKGRGPSPEGSSSTES. Basic residues predominate over residues 1681-1691; sequence KSRTPPRRRSS. Threonine 1698 is subject to Phosphothreonine. Serine 1727, serine 1729, serine 1731, serine 1732, serine 1762, and serine 1764 each carry phosphoserine. 2 stretches are compositionally biased toward basic residues: residues 1769-1789 and 1798-1816; these read GLQR…RRRD and SRRR…RRRG. A phosphoserine mark is found at serine 1818, serine 1822, serine 1854, serine 1857, serine 1876, and serine 1878. Over residues 1834–1854 the composition is skewed to basic residues; it reads SSRRRRGRSRTPPTSRKRSRS. The span at 1862–2068 shows a compositional bias: basic residues; it reads KRSRSRASPA…PRTARGKRSL (207 aa). Threonine 1880 carries the post-translational modification Phosphothreonine. Serine 1884 and serine 1890 each carry phosphoserine. At threonine 1892 the chain carries Phosphothreonine. 5 positions are modified to phosphoserine: serine 1893, serine 1916, serine 1919, serine 1923, and serine 1925. Phosphothreonine occurs at positions 1927 and 1931. Serine 1946 and serine 1948 each carry phosphoserine. Threonine 1950 and threonine 1954 each carry phosphothreonine. A phosphoserine mark is found at serine 1958 and serine 1960. A phosphothreonine mark is found at threonine 1962 and threonine 1966. Phosphoserine is present on residues serine 1970, serine 1972, and serine 1975. Threonine 1978 carries the post-translational modification Phosphothreonine. Serine 1984, serine 1987, serine 1996, serine 1999, serine 2008, serine 2011, serine 2018, and serine 2020 each carry phosphoserine. Residue threonine 2022 is modified to Phosphothreonine. Serine 2030 and serine 2032 each carry phosphoserine. At threonine 2034 the chain carries Phosphothreonine. A phosphoserine mark is found at serine 2042, serine 2044, serine 2046, and serine 2067. Position 2069 is a phosphothreonine (threonine 2069). The span at 2070-2095 shows a compositional bias: low complexity; that stretch reads RSPPAIRRRSASGSSSDRSRSATPPA. Phosphoserine is present on residues serine 2071 and serine 2090. A Phosphothreonine modification is found at threonine 2092. Over residues 2097 to 2124 the composition is skewed to polar residues; sequence RNHSGSRTPPVALNSSRMSCFSRPSMSP. 2 positions are modified to phosphoserine: serine 2100 and serine 2102. A Phosphothreonine modification is found at threonine 2104. Phosphoserine is present on residues serine 2118, serine 2121, serine 2123, and serine 2132. Threonine 2144 carries the post-translational modification Phosphothreonine. 4 positions are modified to omega-N-methylarginine: arginine 2194, arginine 2207, arginine 2231, and arginine 2246. Residue serine 2272 is modified to Phosphoserine. An omega-N-methylarginine mark is found at arginine 2274 and arginine 2288. Residues threonine 2289, threonine 2291, and threonine 2302 each carry the phosphothreonine modification. Serine 2310 is modified (phosphoserine). The segment at 2311-2342 is disordered; that stretch reads LTGSGTPPTAANYPSSSRTPQAPASANLVGPR. Phosphothreonine is present on residues threonine 2316 and threonine 2329. A compositionally biased stretch (polar residues) spans 2317–2334; it reads PPTAANYPSSSRTPQAPA. A Phosphoserine modification is found at serine 2335. An Omega-N-methylarginine modification is found at arginine 2342. Phosphoserine occurs at positions 2343, 2368, and 2376. Threonine 2381 carries the phosphothreonine modification. At serine 2382 the chain carries Phosphoserine. Residue arginine 2384 is modified to Asymmetric dimethylarginine; alternate. Arginine 2384 is modified (omega-N-methylarginine; alternate). Positions 2389–2752 are disordered; it reads AYERVSGRTS…PMRHRSSRSP (364 aa). Serine 2394, serine 2398, and serine 2407 each carry phosphoserine. Threonine 2409 is subject to Phosphothreonine. A phosphoserine mark is found at serine 2412, serine 2415, serine 2426, serine 2429, serine 2449, and serine 2453. Residues 2426–2439 show a composition bias toward polar residues; it reads SPSSRMGQAPSQSL. Residues 2455-2473 show a composition bias toward polar residues; sequence FSDQSRCLIAQTTPVAGSQ. Low complexity-rich tracts occupy residues 2474–2487, 2515–2526, and 2533–2567; these read SLSS…TSSA, AQQPSALAALQP, and SSSS…EGSS. A Phosphoserine modification is found at serine 2581. Threonine 2583 carries the phosphothreonine modification. Lysine 2587 is covalently cross-linked (Glycyl lysine isopeptide (Lys-Gly) (interchain with G-Cter in SUMO2)). The residue at position 2599 (threonine 2599) is a Phosphothreonine. Over residues 2608-2648 the composition is skewed to low complexity; that stretch reads SSSSSSSSSSSSSSSSSSSSSSSSSSSSSSSSSSSSSSSSS. Residues 2651–2668 are compositionally biased toward pro residues; sequence PAKPGPQALPKPASPKKP. Phosphoserine occurs at positions 2664, 2675, 2677, 2684, 2688, 2690, 2692, 2694, 2702, and 2706. Residues 2669-2689 are compositionally biased toward basic and acidic residues; sequence PPGERRSRSPRKPIDSLRDSR. Positions 2707–2716 are enriched in low complexity; it reads PRDQQSSSSE. A compositionally biased stretch (basic and acidic residues) spans 2717–2729; sequence RGSRRGQRGDSRS. Phosphothreonine is present on threonine 2738. Serine 2740 bears the Phosphoserine mark. The segment covering 2743–2752 has biased composition (basic residues); sequence PMRHRSSRSP.

This sequence belongs to the CWC21 family. As to quaternary structure, component of pre-catalytic, catalytic and post-catalytic spliceosome complexes. Found in a pre-mRNA splicing complex with SFRS4, SFRS5, SNRP70, SNRPA1, SRRM1 and SRRM2. Component of the minor spliceosome, which splices U12-type introns. Interacts with DHX8. Interacts with CACTIN. Expressed in liver, placenta, and white blood cells.

The protein localises to the nucleus. It localises to the nucleus speckle. Functionally, required for pre-mRNA splicing as component of the spliceosome. As a component of the minor spliceosome, involved in the splicing of U12-type introns in pre-mRNAs. The chain is Serine/arginine repetitive matrix protein 2 (SRRM2) from Homo sapiens (Human).